The chain runs to 101 residues: Phosphoprotein OPG062 (101 aa).

The interval 51–73 is disordered; that stretch reads PSSPACERRPSSPSRCERMNNPR. Phosphoserine occurs at positions 53 and 62. Residues 56–70 show a composition bias toward basic and acidic residues; that stretch reads CERRPSSPSRCERMN.

It belongs to the orthopoxvirus OPG062 family. Self-associates to form high molecular-weight forms. Interacts with protein OPG157/A30. Interacts with host RICTOR and RPTOR; these interactions disrupt the mTORC1 and mTORC2 crosstalk. In terms of processing, phosphorylated on two serines. While these phosphorylations do not play a role in virion assembly; they are essential for the interaction with host RICTOR and RPTOR.

It is found in the virion. Its function is as follows. Plays an essential role in virion assembly and morphogenesis. Also plays a role in the inhibition of host immune response by dysregulating mTOR. Sequesters host RICTOR and RPTOR, thereby disrupting mTORC1 and mTORC2 crosstalk. In turn, blocks the host antiviral response in part through mTOR-dependent degradation of cGAS, the primary poxvirus sensor. The sequence is that of Phosphoprotein OPG062 (OPG062) from Vaccinia virus (strain Western Reserve) (VACV).